A 514-amino-acid chain; its full sequence is Multifunctional alkaline phosphatase superfamily protein PehA (514 aa).

The Mn(2+) site is built by aspartate 12, cysteine 57, aspartate 324, and histidine 325. The active-site Nucleophile is cysteine 57. 3-oxoalanine (Cys) is present on cysteine 57.

This sequence belongs to the alkaline phosphatase superfamily. In terms of assembly, homotetramer. It depends on Mn(2+) as a cofactor. The conversion to 3-oxoalanine (also known as C-formylglycine, FGly), of a serine or cysteine residue in prokaryotes and of a cysteine residue in eukaryotes, is critical for catalytic activity. Phosphate triester hydrolytic activity is retained with unmodified cysteine acting as a nucleophile.

Its activity is regulated as follows. Anions including Cl(-) and CH3COO(-), and SO4(2-) salts stimulate activity 20-40% at 100 mM. Its function is as follows. Hydrolytic enzyme with a broad substrate specificity acting on phosphate diesters and phosphonate monoesters. Hydrolyzes phosphate mono- and triesters, sulfate monoesters and sulfonate monoesters. Hydrolyzes glyphosate monoesters. Does not hydrolyze DNA or cGMP. Hydrolyzes glyceryl glyphosate, but this substrate has a much lower affinity than the glyphosate monoesters. In Trinickia caryophylli (Paraburkholderia caryophylli), this protein is Multifunctional alkaline phosphatase superfamily protein PehA.